The primary structure comprises 1445 residues: DNA-directed RNA polymerase subunit beta'' (1445 aa).

Zn(2+)-binding residues include cysteine 220, cysteine 293, cysteine 300, and cysteine 303.

It belongs to the RNA polymerase beta' chain family. RpoC2 subfamily. As to quaternary structure, in plastids the minimal PEP RNA polymerase catalytic core is composed of four subunits: alpha, beta, beta', and beta''. When a (nuclear-encoded) sigma factor is associated with the core the holoenzyme is formed, which can initiate transcription. Requires Zn(2+) as cofactor.

The protein localises to the plastid. Its subcellular location is the chloroplast. It carries out the reaction RNA(n) + a ribonucleoside 5'-triphosphate = RNA(n+1) + diphosphate. In terms of biological role, DNA-dependent RNA polymerase catalyzes the transcription of DNA into RNA using the four ribonucleoside triphosphates as substrates. The polypeptide is DNA-directed RNA polymerase subunit beta'' (Anthoceros angustus (Hornwort)).